The following is a 529-amino-acid chain: uncharacterized protein (529 aa).

The protein to M.jannaschii MJ1451.

This is an uncharacterized protein from Methanothermobacter thermautotrophicus (strain ATCC 29096 / DSM 1053 / JCM 10044 / NBRC 100330 / Delta H) (Methanobacterium thermoautotrophicum).